Consider the following 250-residue polypeptide: NAD(P)H-quinone oxidoreductase subunit K, chloroplastic (250 aa).

The [4Fe-4S] cluster site is built by Cys67, Cys68, Cys132, and Cys163.

It belongs to the complex I 20 kDa subunit family. As to quaternary structure, NDH is composed of at least 16 different subunits, 5 of which are encoded in the nucleus. Requires [4Fe-4S] cluster as cofactor.

The protein resides in the plastid. It localises to the chloroplast thylakoid membrane. The catalysed reaction is a plastoquinone + NADH + (n+1) H(+)(in) = a plastoquinol + NAD(+) + n H(+)(out). The enzyme catalyses a plastoquinone + NADPH + (n+1) H(+)(in) = a plastoquinol + NADP(+) + n H(+)(out). Its function is as follows. NDH shuttles electrons from NAD(P)H:plastoquinone, via FMN and iron-sulfur (Fe-S) centers, to quinones in the photosynthetic chain and possibly in a chloroplast respiratory chain. The immediate electron acceptor for the enzyme in this species is believed to be plastoquinone. Couples the redox reaction to proton translocation, and thus conserves the redox energy in a proton gradient. This chain is NAD(P)H-quinone oxidoreductase subunit K, chloroplastic, found in Adiantum capillus-veneris (Maidenhair fern).